We begin with the raw amino-acid sequence, 151 residues long: 3-hydroxyacyl-[acyl-carrier-protein] dehydratase FabZ (151 aa).

Residue histidine 49 is part of the active site.

Belongs to the thioester dehydratase family. FabZ subfamily.

It localises to the cytoplasm. The enzyme catalyses a (3R)-hydroxyacyl-[ACP] = a (2E)-enoyl-[ACP] + H2O. Involved in unsaturated fatty acids biosynthesis. Catalyzes the dehydration of short chain beta-hydroxyacyl-ACPs and long chain saturated and unsaturated beta-hydroxyacyl-ACPs. The chain is 3-hydroxyacyl-[acyl-carrier-protein] dehydratase FabZ from Bordetella petrii (strain ATCC BAA-461 / DSM 12804 / CCUG 43448).